Reading from the N-terminus, the 396-residue chain is Ribosomal RNA large subunit methyltransferase I (396 aa).

Residues 2-81 (SVRLVLAKGR…ESIDIAFFTR (80 aa)) enclose the PUA domain.

This sequence belongs to the methyltransferase superfamily. RlmI family.

It is found in the cytoplasm. It carries out the reaction cytidine(1962) in 23S rRNA + S-adenosyl-L-methionine = 5-methylcytidine(1962) in 23S rRNA + S-adenosyl-L-homocysteine + H(+). Its function is as follows. Specifically methylates the cytosine at position 1962 (m5C1962) of 23S rRNA. The protein is Ribosomal RNA large subunit methyltransferase I of Escherichia coli O127:H6 (strain E2348/69 / EPEC).